We begin with the raw amino-acid sequence, 352 residues long: MTQISERLLVQAHLDAKQPKPLTAEEEAFYRREIAAELKKQNAVLVAHYYCDPVIQALAEETGGCVSDSLEMARFGNQHPAQTVVVAGVKFMGETAKILNPEKRVLMPTLEATCSLDLGCPVDEFSAFCDQHPERTVVVYANTSAAVKARADWVVTSSCALEIVESLMDNGETIIWAPDKHLGNYIQRETGADMLLWDGACIVHEEFKSKQLLDMKALYPDAAILVHPESPQSVVELADAVGSTSQLIKAAQTLPNSTFIVATDRGIFYKMQQLCPDKTFIEAPTAGNGAACRSCAHCPWMAMNTLERVLTGLRQGSGEIHVDPALIPKAIKPLKRMLDFTQAARMKVAGNA.

Iminosuccinate-binding residues include H48 and S69. C114 lines the [4Fe-4S] cluster pocket. Iminosuccinate is bound by residues 140–142 (YAN) and S157. Position 201 (C201) interacts with [4Fe-4S] cluster. Residues 227 to 229 (HPE) and T244 contribute to the iminosuccinate site. Residue C298 coordinates [4Fe-4S] cluster.

The protein belongs to the quinolinate synthase family. Type 1 subfamily. [4Fe-4S] cluster serves as cofactor.

It localises to the cytoplasm. The catalysed reaction is iminosuccinate + dihydroxyacetone phosphate = quinolinate + phosphate + 2 H2O + H(+). It functions in the pathway cofactor biosynthesis; NAD(+) biosynthesis; quinolinate from iminoaspartate: step 1/1. Its function is as follows. Catalyzes the condensation of iminoaspartate with dihydroxyacetone phosphate to form quinolinate. This Ectopseudomonas mendocina (strain ymp) (Pseudomonas mendocina) protein is Quinolinate synthase.